Here is a 126-residue protein sequence, read N- to C-terminus: Fluoride-specific ion channel FluC (126 aa).

The next 4 membrane-spanning stretches (helical) occupy residues 3–23 (PLGF…RWGL), 36–56 (YGTL…VGFF), 68–88 (LLAI…SSEA), and 99–119 (WALL…ALGL). Na(+) contacts are provided by glycine 76 and threonine 79.

Belongs to the fluoride channel Fluc/FEX (TC 1.A.43) family.

The protein localises to the cell inner membrane. It catalyses the reaction fluoride(in) = fluoride(out). Na(+) is not transported, but it plays an essential structural role and its presence is essential for fluoride channel function. Its function is as follows. Fluoride-specific ion channel. Important for reducing fluoride concentration in the cell, thus reducing its toxicity. The polypeptide is Fluoride-specific ion channel FluC (Cupriavidus pinatubonensis (strain JMP 134 / LMG 1197) (Cupriavidus necator (strain JMP 134))).